The sequence spans 263 residues: Protein M1425_2021 (263 aa).

This sequence belongs to the CinA family.

This Saccharolobus islandicus (strain M.14.25 / Kamchatka #1) (Sulfolobus islandicus) protein is Protein M1425_2021.